The primary structure comprises 260 residues: Triosephosphate isomerase (260 aa).

11–13 (NWK) contributes to the substrate binding site. The active-site Electrophile is histidine 103. Glutamate 175 (proton acceptor) is an active-site residue. Substrate contacts are provided by residues glycine 181, serine 220, and 241-242 (GG).

This sequence belongs to the triosephosphate isomerase family. In terms of assembly, homodimer.

It localises to the cytoplasm. The enzyme catalyses D-glyceraldehyde 3-phosphate = dihydroxyacetone phosphate. The protein operates within carbohydrate biosynthesis; gluconeogenesis. It participates in carbohydrate degradation; glycolysis; D-glyceraldehyde 3-phosphate from glycerone phosphate: step 1/1. Functionally, involved in the gluconeogenesis. Catalyzes stereospecifically the conversion of dihydroxyacetone phosphate (DHAP) to D-glyceraldehyde-3-phosphate (G3P). The chain is Triosephosphate isomerase from Shewanella woodyi (strain ATCC 51908 / MS32).